The primary structure comprises 704 residues: Elongation factor G (704 aa).

Positions 8-290 (ARYRNIGISA…AVIEYLPAPT (283 aa)) constitute a tr-type G domain. GTP is bound by residues 17–24 (AHIDAGKT), 88–92 (DTPGH), and 142–145 (NKMD).

Belongs to the TRAFAC class translation factor GTPase superfamily. Classic translation factor GTPase family. EF-G/EF-2 subfamily.

The protein localises to the cytoplasm. Catalyzes the GTP-dependent ribosomal translocation step during translation elongation. During this step, the ribosome changes from the pre-translocational (PRE) to the post-translocational (POST) state as the newly formed A-site-bound peptidyl-tRNA and P-site-bound deacylated tRNA move to the P and E sites, respectively. Catalyzes the coordinated movement of the two tRNA molecules, the mRNA and conformational changes in the ribosome. This Proteus mirabilis (strain HI4320) protein is Elongation factor G.